The sequence spans 192 residues: Glycerol-3-phosphate acyltransferase (192 aa).

The next 5 membrane-spanning stretches (helical) occupy residues 4–24, 54–74, 80–100, 112–132, and 154–174; these read MFWL…AILL, LAIL…LIAS, IAQQ…PVYF, AGVL…AWLL, and LLAW…LLIV.

The protein belongs to the PlsY family. As to quaternary structure, probably interacts with PlsX.

It localises to the cell inner membrane. The enzyme catalyses an acyl phosphate + sn-glycerol 3-phosphate = a 1-acyl-sn-glycero-3-phosphate + phosphate. It functions in the pathway lipid metabolism; phospholipid metabolism. Its function is as follows. Catalyzes the transfer of an acyl group from acyl-phosphate (acyl-PO(4)) to glycerol-3-phosphate (G3P) to form lysophosphatidic acid (LPA). This enzyme utilizes acyl-phosphate as fatty acyl donor, but not acyl-CoA or acyl-ACP. The chain is Glycerol-3-phosphate acyltransferase from Pseudomonas savastanoi pv. phaseolicola (strain 1448A / Race 6) (Pseudomonas syringae pv. phaseolicola (strain 1448A / Race 6)).